Reading from the N-terminus, the 67-residue chain is Cell division protein ZapB (67 aa).

Positions 3–59 form a coiled coil; the sequence is LELLSKLETKIQAALETIELLKMELEEEKQTSSSLSEQNQQLQQELTSWNEKVTGLV.

Belongs to the ZapB family. In terms of assembly, homodimer. The ends of the coiled-coil dimer bind to each other, forming polymers. Interacts with FtsZ.

The protein localises to the cytoplasm. Its function is as follows. Non-essential, abundant cell division factor that is required for proper Z-ring formation. It is recruited early to the divisome by direct interaction with FtsZ, stimulating Z-ring assembly and thereby promoting cell division earlier in the cell cycle. Its recruitment to the Z-ring requires functional FtsA or ZipA. This Shewanella halifaxensis (strain HAW-EB4) protein is Cell division protein ZapB.